The sequence spans 893 residues: Alanine--tRNA ligase (893 aa).

The protein belongs to the class-II aminoacyl-tRNA synthetase family.

It localises to the cytoplasm. The catalysed reaction is tRNA(Ala) + L-alanine + ATP = L-alanyl-tRNA(Ala) + AMP + diphosphate. Its function is as follows. Catalyzes the attachment of alanine to tRNA(Ala) in a two-step reaction: alanine is first activated by ATP to form Ala-AMP and then transferred to the acceptor end of tRNA(Ala). Also edits incorrectly charged Ser-tRNA(Ala) and Gly-tRNA(Ala) via its editing domain. This Leuconostoc mesenteroides subsp. mesenteroides (strain ATCC 8293 / DSM 20343 / BCRC 11652 / CCM 1803 / JCM 6124 / NCDO 523 / NBRC 100496 / NCIMB 8023 / NCTC 12954 / NRRL B-1118 / 37Y) protein is Alanine--tRNA ligase (alaS).